A 212-amino-acid polypeptide reads, in one-letter code: MGGRWSKSSIVGWPAIRERIRRTDPRRTDPAADGVGAASRDLEKHGAITSSNTRDTNADCAWLEAQEESEEVGFPVRPQVPLRPMTYKLAVDLSHFLKEKGGLEGLIWSKKRQEILDLWVYNTQGIFPDWQNYTPGPGIRYPLTFGWCFELVPVDPREVEEATEGETNCLLHPVCQHGMEDTEREVLKWRFNSRLAFEHKAREMHPEFYKDC.

Residue glycine 2 is the site of N-myristoyl glycine; by host attachment. Residue serine 6 is modified to Phosphoserine; by host. The segment at 67 to 71 (EESEE) is acidic; interacts with host PACS1 and PACS2; stabilizes the interaction of NEF/MHC-I with host AP1M1; necessary for MHC-I internalization. An SH3-binding; interaction with Src family tyrosine kinases region spans residues 75 to 84 (PVRPQVPLRP). Positions 78–81 (PQVP) match the PxxP; stabilizes the interaction of NEF/MHC-I with host AP1M1; necessary for MHC-I internalization motif. The mediates dimerization, Nef-PTE1 interaction stretch occupies residues 114-130 (EILDLWVYNTQGIFPDW). Residues 154-186 (VDPREVEEATEGETNCLLHPVCQHGMEDTEREV) form a binding to ATP6V1H region. The Dileucine internalization motif; necessary for CD4 internalization signature appears at 170–171 (LL). Positions 180–181 (ED) match the Diacidic; necessary for CD4 internalization motif.

Belongs to the lentivirus primate group Nef protein family. Monomer; cytosolic form. Homodimer; membrane bound form. Interacts with Nef associated p21-activated kinase (PAK2); this interaction activates PAK2. Associates with the Nef-MHC-I-AP1 complex; this complex is required for MHC-I internalization. Interacts (via C-terminus) with host PI3-kinase. Interacts with host PACS1; this interaction seems to be weak. Interacts with host PACS2. Interacts with host LCK and MAPK3; these interactions inhibit the kinase activity of the latter. Interacts with host ATP6V1H; this interaction may play a role in CD4 endocytosis. Associates with the CD4-Nef-AP2 complex; this complex is required for CD4 internalization. Interacts with host AP2 subunit alpha and AP2 subunit sigma2. Interacts with TCR-zeta chain; this interaction up-regulates the Fas ligand (FasL) surface expression. Interacts with host HCK, LYN, and SRC; these interactions activate the Src family kinases. Interacts with MAP3K5; this interaction inhibits the Fas and TNFR-mediated death signals. Interacts with beta-COP and PTE1. Interacts with human RACK1; this increases Nef phosphorylation by PKC. Interacts with TP53; this interaction decreases the half-life of TP53, protecting the infected cell against p53-mediated apoptosis. Post-translationally, the virion-associated Nef proteins are cleaved by the viral protease to release the soluble C-terminal core protein. Nef is probably cleaved concomitantly with viral structural proteins on maturation of virus particles. Myristoylated. In terms of processing, phosphorylated on serine residues, probably by host PKCdelta and theta.

It localises to the host cell membrane. Its subcellular location is the virion. It is found in the secreted. The protein localises to the host Golgi apparatus membrane. Factor of infectivity and pathogenicity, required for optimal virus replication. Alters numerous pathways of T-lymphocyte function and down-regulates immunity surface molecules in order to evade host defense and increase viral infectivity. Alters the functionality of other immunity cells, like dendritic cells, monocytes/macrophages and NK cells. Its function is as follows. In infected CD4(+) T-lymphocytes, down-regulates the surface MHC-I, mature MHC-II, CD4, CD28, CCR5 and CXCR4 molecules. Mediates internalization and degradation of host CD4 through the interaction of with the cytoplasmic tail of CD4, the recruitment of AP-2 (clathrin adapter protein complex 2), internalization through clathrin coated pits, and subsequent transport to endosomes and lysosomes for degradation. Diverts host MHC-I molecules to the trans-Golgi network-associated endosomal compartments by an endocytic pathway to finally target them for degradation. MHC-I down-regulation may involve AP-1 (clathrin adapter protein complex 1) or possibly Src family kinase-ZAP70/Syk-PI3K cascade recruited by PACS2. In consequence infected cells are masked for immune recognition by cytotoxic T-lymphocytes. Decreasing the number of immune receptors also prevents reinfection by more HIV particles (superinfection). Down-regulates host SERINC3 and SERINC5 thereby excluding these proteins from the viral particles. Virion infectivity is drastically higher when SERINC3 or SERINC5 are excluded from the viral envelope, because these host antiviral proteins impair the membrane fusion event necessary for subsequent virion penetration. Functionally, bypasses host T-cell signaling by inducing a transcriptional program nearly identical to that of anti-CD3 cell activation. Interaction with TCR-zeta chain up-regulates the Fas ligand (FasL). Increasing surface FasL molecules and decreasing surface MHC-I molecules on infected CD4(+) cells send attacking cytotoxic CD8+ T-lymphocytes into apoptosis. In terms of biological role, plays a role in optimizing the host cell environment for viral replication without causing cell death by apoptosis. Protects the infected cells from apoptosis in order to keep them alive until the next virus generation is ready to strike. Inhibits the Fas and TNFR-mediated death signals by blocking MAP3K5/ASK1. Decreases the half-life of TP53, protecting the infected cell against p53-mediated apoptosis. Inhibits the apoptotic signals regulated by the Bcl-2 family proteins through the formation of a Nef/PI3-kinase/PAK2 complex that leads to activation of PAK2 and induces phosphorylation of host BAD. Extracellular Nef protein targets CD4(+) T-lymphocytes for apoptosis by interacting with CXCR4 surface receptors. This is Protein Nef from Homo sapiens (Human).